Reading from the N-terminus, the 126-residue chain is Holo-[acyl-carrier-protein] synthase (126 aa).

Mg(2+) is bound by residues D9 and E58.

Belongs to the P-Pant transferase superfamily. AcpS family. Mg(2+) serves as cofactor.

The protein resides in the cytoplasm. It catalyses the reaction apo-[ACP] + CoA = holo-[ACP] + adenosine 3',5'-bisphosphate + H(+). Transfers the 4'-phosphopantetheine moiety from coenzyme A to a Ser of acyl-carrier-protein. This Vibrio atlanticus (strain LGP32) (Vibrio splendidus (strain Mel32)) protein is Holo-[acyl-carrier-protein] synthase.